Reading from the N-terminus, the 892-residue chain is Alanine--tRNA ligase (892 aa).

Residues histidine 596, histidine 600, cysteine 700, and histidine 704 each coordinate Zn(2+).

This sequence belongs to the class-II aminoacyl-tRNA synthetase family. It depends on Zn(2+) as a cofactor.

The protein localises to the cytoplasm. It carries out the reaction tRNA(Ala) + L-alanine + ATP = L-alanyl-tRNA(Ala) + AMP + diphosphate. Catalyzes the attachment of alanine to tRNA(Ala) in a two-step reaction: alanine is first activated by ATP to form Ala-AMP and then transferred to the acceptor end of tRNA(Ala). Also edits incorrectly charged Ser-tRNA(Ala) and Gly-tRNA(Ala) via its editing domain. This is Alanine--tRNA ligase from Methanococcus maripaludis (strain C6 / ATCC BAA-1332).